The sequence spans 112 residues: Large ribosomal subunit protein uL22 (112 aa).

The protein belongs to the universal ribosomal protein uL22 family. In terms of assembly, part of the 50S ribosomal subunit.

This protein binds specifically to 23S rRNA; its binding is stimulated by other ribosomal proteins, e.g. L4, L17, and L20. It is important during the early stages of 50S assembly. It makes multiple contacts with different domains of the 23S rRNA in the assembled 50S subunit and ribosome. In terms of biological role, the globular domain of the protein is located near the polypeptide exit tunnel on the outside of the subunit, while an extended beta-hairpin is found that lines the wall of the exit tunnel in the center of the 70S ribosome. In Anaplasma phagocytophilum (strain HZ), this protein is Large ribosomal subunit protein uL22.